A 345-amino-acid chain; its full sequence is MNINDILKKLINKSDLEIDEAEELAKAIIRGEVPEILVSAILVALRMKGESKNEIVGFARAMRELAIKIDVPNAIDTAGTGGDGLGTVNVSTASAILLSLINPVAKHGNRAVSGKSGSADVLEALGYNIIVPPERAKELIHKTNFVFLFAQYYHPAMKNVANVRKTLGIRTIFNILGPLTNPANAKYQLMGVFSKDHLDLLSKSAYELDFNKVILVHGEPGIDEVSPIGKTFMKIVSKRGIEEVKFDVTDFGISSIPIDKLIVNSAEDSAIKIVRAFLGKDEHVAEFIKINTAVALFALDKVSDFKEGYEYAKYLIENSVNKLNEIISLNGDLTKLKTIMVKSSG.

Residues glycine 79, glycine 82–aspartate 83, threonine 87, asparagine 89–threonine 92, lysine 106–glycine 114, and serine 118 each bind 5-phospho-alpha-D-ribose 1-diphosphate. Glycine 79 provides a ligand contact to anthranilate. Residue serine 91 coordinates Mg(2+). Residue asparagine 109 participates in anthranilate binding. An anthranilate-binding site is contributed by arginine 164. 2 residues coordinate Mg(2+): aspartate 223 and glutamate 224.

It belongs to the anthranilate phosphoribosyltransferase family. In terms of assembly, homodimer. The cofactor is Mg(2+).

It carries out the reaction N-(5-phospho-beta-D-ribosyl)anthranilate + diphosphate = 5-phospho-alpha-D-ribose 1-diphosphate + anthranilate. It functions in the pathway amino-acid biosynthesis; L-tryptophan biosynthesis; L-tryptophan from chorismate: step 2/5. Catalyzes the transfer of the phosphoribosyl group of 5-phosphorylribose-1-pyrophosphate (PRPP) to anthranilate to yield N-(5'-phosphoribosyl)-anthranilate (PRA). The polypeptide is Anthranilate phosphoribosyltransferase (Saccharolobus islandicus (strain L.S.2.15 / Lassen #1) (Sulfolobus islandicus)).